Consider the following 428-residue polypeptide: D-inositol 3-phosphate glycosyltransferase (428 aa).

His5 contributes to the 1D-myo-inositol 3-phosphate binding site. UDP-N-acetyl-alpha-D-glucosamine-binding positions include 11-12 (QP) and Gly19. 1D-myo-inositol 3-phosphate contacts are provided by residues 16-21 (DAGGMN), Lys74, Tyr107, Thr131, and Arg151. Positions 225, 230, and 283 each coordinate UDP-N-acetyl-alpha-D-glucosamine. Phe292, Gln293, and Ala295 together coordinate Mg(2+). UDP-N-acetyl-alpha-D-glucosamine is bound by residues Glu305 and Glu313. Residue Thr319 participates in Mg(2+) binding.

This sequence belongs to the glycosyltransferase group 1 family. MshA subfamily. Homodimer.

The catalysed reaction is 1D-myo-inositol 3-phosphate + UDP-N-acetyl-alpha-D-glucosamine = 1D-myo-inositol 2-acetamido-2-deoxy-alpha-D-glucopyranoside 3-phosphate + UDP + H(+). Functionally, catalyzes the transfer of a N-acetyl-glucosamine moiety to 1D-myo-inositol 3-phosphate to produce 1D-myo-inositol 2-acetamido-2-deoxy-glucopyranoside 3-phosphate in the mycothiol biosynthesis pathway. This is D-inositol 3-phosphate glycosyltransferase from Mycobacterium leprae (strain Br4923).